Reading from the N-terminus, the 29-residue chain is GRKKGVQFDEGAPDDFDPNNPYKKDVAFL.

A disordered region spans residues 1–29; that stretch reads GRKKGVQFDEGAPDDFDPNNPYKKDVAFL.

The protein belongs to the complex I NDUFB10 subunit family. Complex I is composed of about 45 different subunits.

It localises to the mitochondrion inner membrane. In terms of biological role, accessory subunit of the mitochondrial membrane respiratory chain NADH dehydrogenase (Complex I), that is believed not to be involved in catalysis. Complex I functions in the transfer of electrons from NADH to the respiratory chain. The immediate electron acceptor for the enzyme is believed to be ubiquinone. This chain is NADH dehydrogenase [ubiquinone] 1 beta subcomplex subunit 10, found in Solanum tuberosum (Potato).